The sequence spans 334 residues: Putative transport protein MJ1177 (334 aa).

A run of 7 helical transmembrane segments spans residues 13–33 (VIVGLLIMLLYIIWPFIDVLA), 61–81 (LAISIYILPIMTITIYALLTF), 138–158 (IIDVGYLIVKVIMVLFLTFYF), 191–211 (SYKNLFISCVSLSIIITILSY), 234–254 (LLPILGGWMVYISIAIYFFLI), 259–279 (KAVFMFIYGELFLSIAPDFVI), and 293–313 (VLVVIAFLMAPLSLGLSGFAI).

This sequence belongs to the autoinducer-2 exporter (AI-2E) (TC 2.A.86) family.

It is found in the cell membrane. The sequence is that of Putative transport protein MJ1177 from Methanocaldococcus jannaschii (strain ATCC 43067 / DSM 2661 / JAL-1 / JCM 10045 / NBRC 100440) (Methanococcus jannaschii).